A 530-amino-acid chain; its full sequence is Polyprotein pp62 (530 aa).

Belongs to the asfivirus polyprotein pp62 family. Monomer. Predominantly exists as a monomer, with very little dimers. Homodimerization seems to be linked to low pH. In terms of assembly, homodimer; disulfide-linked. Homotrimer; disulfide-linked. Homohexamer. Monoubiquitinated in vitro by viral UBCv1. Post-translationally, specific enzymatic cleavages in vivo by the viral pS273R protease yield mature proteins.

Its subcellular location is the host cytoplasm. It is found in the host perinuclear region. The protein resides in the virion. Its function is as follows. Essential for the correct assembly and maturation of the core of the virion. Component of the core shell. Binds to phosphatidylserine, which may enable the core shell binding with the inner membrane. Functionally, component of the core shell. Binds to phosphatidylserine and DNA, which may link the core shell to the inner membrane and to the viral nucleoid. In terms of biological role, component of the core shell. The sequence is that of Polyprotein pp62 from African swine fever virus (strain Badajoz 1971 Vero-adapted) (Ba71V).